The primary structure comprises 1310 residues: Zinc finger protein 521 (1310 aa).

A compositionally biased stretch (basic residues) spans 1–10 (MSRRKQAKPR). Residues 1-46 (MSRRKQAKPRSLKDPNCKLEDTSEDGESPDCKKRQEEGDELEEEEA) form a disordered region. Basic and acidic residues predominate over residues 11-21 (SLKDPNCKLED). The C2H2-type 1; degenerate zinc-finger motif lies at 48 to 68 (HSCDSCLQVFESLSDITEHKI). The disordered stretch occupies residues 82–106 (DPTCSWPASSPSSKDQASPIHGEGF). The segment covering 87–97 (WPASSPSSKDQ) has biased composition (polar residues). 7 consecutive C2H2-type zinc fingers follow at residues 119–141 (YPCQ…EQSH), 147–169 (FKCT…IKLH), 175–197 (YHCS…LKTH), 203–225 (YKCA…MQVH), 247–270 (QKCS…AECH), 282–305 (LQCM…EQIH), and 311–333 (NSCN…MDSH). The C2H2-type 9; degenerate zinc finger occupies 404-428 (YSCIYCSKQLFSSLAVLQIHLKTMH). C2H2-type zinc fingers lie at residues 436 to 459 (HICQ…KQVH), 476 to 499 (YQCN…RSSH), and 512 to 535 (FFCP…RQVH). The C2H2-type 13; atypical zinc finger occupies 559 to 584 (YSCSYCTNSPIFNSVLKLNKHIKENH). 7 consecutive C2H2-type zinc fingers follow at residues 633–655 (YICN…LKTH), 663–685 (LTCP…VTIH), 693–716 (YICE…LDMH), 721–744 (FRCT…AVKH), 751–774 (YRCT…KHNH), 782–804 (HKCI…ITTH), and 808–831 (YNCK…REKH). The segment at 885-907 (YGCDICGAAYTMESLLQNHQLRD) adopts a C2H2-type 21; degenerate zinc-finger fold. 3 C2H2-type zinc fingers span residues 929–951 (YKCN…MQTH), 958–980 (YMCP…KVTH), and 1019–1041 (FRCV…GTFH). The segment at 1064–1082 (YKCASCLKEFRSKQDLVKL) adopts a C2H2-type 25; degenerate zinc-finger fold. C2H2-type zinc fingers lie at residues 1138-1161 (TRCS…QTIH), 1194-1216 (YQCI…VANH), 1224-1246 (HECK…LIEH), 1255-1278 (FKCP…FSAH), and 1285-1308 (YDCA…MSQH).

This sequence belongs to the krueppel C2H2-type zinc-finger protein family.

It is found in the nucleus. Functionally, transcription factor that can both act as an activator or a repressor depending on the context. Involved in BMP signaling and in the regulation of the immature compartment of the hematopoietic system. This Xenopus laevis (African clawed frog) protein is Zinc finger protein 521 (znf521).